The primary structure comprises 1049 residues: Protein phosphatase Slingshot homolog 1 (1049 aa).

Residues 1 to 12 are compositionally biased toward polar residues; sequence MALVTLQRSPTP. Residues 1-28 are disordered; it reads MALVTLQRSPTPSAASSSASNSELEAGS. At Ala2 the chain carries N-acetylalanine. Over residues 13–25 the composition is skewed to low complexity; that stretch reads SAASSSASNSELE. Ser37 and Ser57 each carry phosphoserine. The region spanning 249-304 is the DEK-C domain; that stretch reads ERTERLIKAKLRSIMMSQDLENVTSKEIRNELEKQMNCNLKELKEFIDNEMLLILG. The 142-residue stretch at 308-449 folds into the Tyrosine-protein phosphatase domain; it reads KPSLIFDHLY…LSEYEGILDA (142 aa). Cys393 acts as the Phosphocysteine intermediate in catalysis. The disordered stretch occupies residues 456–499; it reads KLWRQQTDSSLQQPVDDPAGPGDFLPETPDGTPESQLPFLDDAA. Over residues 458-468 the composition is skewed to polar residues; it reads WRQQTDSSLQQ. Ser515 is subject to Phosphoserine. Disordered stretches follow at residues 544 to 603, 693 to 787, 825 to 899, and 923 to 955; these read AAPP…RWGQ, HLAS…KPAK, HTKE…KSPP, and PTSSSMSSNLTRSSSSDSIHSVRGKPGLVKQRT. Residues 564–573 show a composition bias toward basic and acidic residues; that stretch reads CEKDVKKKLE. Phosphoserine is present on Ser576. Residues 731–742 show a composition bias toward low complexity; sequence GAALEPPASLLE. A compositionally biased stretch (basic and acidic residues) spans 772 to 787; it reads VIKEESSPKKDMKPAK. Position 897 is a phosphoserine (Ser897). The interaction with YWHAG stretch occupies residues 897–1049; sequence SPPPFFYRLD…LKSPSWMSKS (153 aa). Residues 925–943 show a composition bias toward low complexity; it reads SSSMSSNLTRSSSSDSIHS. Ser978 carries the phosphoserine modification. Residues 989-1049 form a disordered region; that stretch reads TEDLSSEADP…LKSPSWMSKS (61 aa). The span at 1001–1013 shows a compositional bias: polar residues; the sequence is VADSQDTTLSESS.

Belongs to the protein-tyrosine phosphatase family. In terms of assembly, interacts with actin and this stimulates phosphatase activity. Also interacts with LIMK1 and with the 14-3-3 proteins YWHAB, YWHAG, YWHAQ, and YWHAZ. Interaction with 14-3-3 proteins inhibits phosphatase activity and also blocks recruitment to lamellipodia and stimulation by actin. Post-translationally, phosphorylated. Inhibitory phosphorylation by PAK4 promotes binding to YWHAZ. Phosphorylation at Ser-978 is decreased by stimuli which promote actin reorganization and lamellipodia formation. Can be dephosphorylated and activated by PPP3CA/calcineurin A. Phosphorylation decreases immediately prior to telophase.

Its subcellular location is the cytoplasm. It localises to the cytoskeleton. It is found in the cell projection. The protein localises to the lamellipodium. The protein resides in the cleavage furrow. Its subcellular location is the midbody. It carries out the reaction O-phospho-L-tyrosyl-[protein] + H2O = L-tyrosyl-[protein] + phosphate. The enzyme catalyses O-phospho-L-seryl-[protein] + H2O = L-seryl-[protein] + phosphate. It catalyses the reaction O-phospho-L-threonyl-[protein] + H2O = L-threonyl-[protein] + phosphate. Its function is as follows. Protein phosphatase which regulates actin filament dynamics. Dephosphorylates and activates the actin binding/depolymerizing factor cofilin, which subsequently binds to actin filaments and stimulates their disassembly. Inhibitory phosphorylation of cofilin is mediated by LIMK1, which may also be dephosphorylated and inactivated by this protein. This Homo sapiens (Human) protein is Protein phosphatase Slingshot homolog 1.